The chain runs to 540 residues: Chaperonin GroEL (540 aa).

ATP is bound by residues 29-32 (TLGP), 86-90 (DGTTT), G413, 476-478 (NAA), and D492.

Belongs to the chaperonin (HSP60) family. In terms of assembly, forms a cylinder of 14 subunits composed of two heptameric rings stacked back-to-back. Interacts with the co-chaperonin GroES.

It localises to the cytoplasm. It catalyses the reaction ATP + H2O + a folded polypeptide = ADP + phosphate + an unfolded polypeptide.. Together with its co-chaperonin GroES, plays an essential role in assisting protein folding. The GroEL-GroES system forms a nano-cage that allows encapsulation of the non-native substrate proteins and provides a physical environment optimized to promote and accelerate protein folding. This chain is Chaperonin GroEL, found in Streptococcus agalactiae.